The sequence spans 100 residues: Urease subunit gamma (100 aa).

This sequence belongs to the urease gamma subunit family. In terms of assembly, heterotrimer of UreA (gamma), UreB (beta) and UreC (alpha) subunits. Three heterotrimers associate to form the active enzyme.

It localises to the cytoplasm. It carries out the reaction urea + 2 H2O + H(+) = hydrogencarbonate + 2 NH4(+). It participates in nitrogen metabolism; urea degradation; CO(2) and NH(3) from urea (urease route): step 1/1. In Pseudomonas putida (strain ATCC 700007 / DSM 6899 / JCM 31910 / BCRC 17059 / LMG 24140 / F1), this protein is Urease subunit gamma.